The sequence spans 313 residues: BTB/POZ domain-containing adapter for CUL3-mediated RhoA degradation protein 3 (313 aa).

Met-1 is subject to N-acetylmethionine. Ser-23 is subject to Phosphoserine. The region spanning 32–100 (KYVKLNVGGA…LRDGAVPLPE (69 aa)) is the BTB domain. A PCNA-binding motif is present at residues 239 to 245 (QTKVEFP).

Belongs to the BACURD family. Homotetramer; forms a two-fold symmetric tetramer in solution. Interacts with CUL3; interaction is direct and forms a 5:5 heterodecamer. Component of the BCR(BACURD3) E3 ubiquitin ligase complex, at least composed of CUL3, KCTD10/BACURD3 and RBX1. Interacts with DNA polymerase delta subunit 2/POLD2. Interacts with PCNA.

The protein resides in the nucleus. The protein operates within protein modification; protein ubiquitination. Substrate-specific adapter of a BCR (BTB-CUL3-RBX1) E3 ubiquitin-protein ligase complex. The BCR(BACURD3) E3 ubiquitin ligase complex mediates the ubiquitination of target proteins, leading to their degradation by the proteasome. In Homo sapiens (Human), this protein is BTB/POZ domain-containing adapter for CUL3-mediated RhoA degradation protein 3 (KCTD10).